The chain runs to 337 residues: Pyridoxal 5'-phosphate synthase subunit PdxS (337 aa).

Asp63 serves as a coordination point for D-ribose 5-phosphate. The Schiff-base intermediate with D-ribose 5-phosphate role is filled by Lys120. Gly192 contacts D-ribose 5-phosphate. D-glyceraldehyde 3-phosphate is bound at residue Lys204. D-ribose 5-phosphate-binding positions include Gly253 and 274–275 (GS).

It belongs to the PdxS/SNZ family. In terms of assembly, in the presence of PdxT, forms a dodecamer of heterodimers.

The enzyme catalyses aldehydo-D-ribose 5-phosphate + D-glyceraldehyde 3-phosphate + L-glutamine = pyridoxal 5'-phosphate + L-glutamate + phosphate + 3 H2O + H(+). It functions in the pathway cofactor biosynthesis; pyridoxal 5'-phosphate biosynthesis. Catalyzes the formation of pyridoxal 5'-phosphate from ribose 5-phosphate (RBP), glyceraldehyde 3-phosphate (G3P) and ammonia. The ammonia is provided by the PdxT subunit. Can also use ribulose 5-phosphate and dihydroxyacetone phosphate as substrates, resulting from enzyme-catalyzed isomerization of RBP and G3P, respectively. The protein is Pyridoxal 5'-phosphate synthase subunit PdxS of Aeropyrum pernix (strain ATCC 700893 / DSM 11879 / JCM 9820 / NBRC 100138 / K1).